Here is a 244-residue protein sequence, read N- to C-terminus: MLKPSLNAAAKWMIRNTIVSNESLTPEINLHLITIASPLWMSTPDACPLPDPYWAFYWPGGQGLSRFILDNKPLFQGSEIVDFGAGCGSASISASICGAKKILANDIDRYALLSTKLNFHLNNLRDSKIQYSSINFLDDKNERMSTQFFTDSKNIRKFILLGDMFYDSDFAELLFSWLKKIQDAHMVRVLVGDPDRHPLAESEYLQRYKTKFTKNQLAEFSLPGYVIKEHYGFNTAKVFELKFQ.

This sequence belongs to the methyltransferase superfamily. ETFBKMT family.

In terms of biological role, probable methyltransferase. The polypeptide is Electron transfer flavoprotein beta subunit lysine methyltransferase homolog (Caenorhabditis elegans).